A 258-amino-acid chain; its full sequence is MKITKIEKKKRLYLIELDNDESLYVTEDTIVRFMLSKDKVLDNDQLEDMKHFAQLSYGKNLALYFLSFQQRSNKQVADYLRKHEIEEHIIPDIITQLQEEQWIDDTKLADTYIRQNQLNGDKGPQVLKQKLLQKGIASHDIDPILSQTDFSQLAQKVSQKLFDKYQEKLPPKALKDKITQALLTKGFSYDLAKHSLNHLNFDQDNQEIENLLDKELDKQYRKLSRKYDGYTLKQKLYQALYRKGYNSDDINCKLRNYL.

The protein belongs to the RecX family.

The protein resides in the cytoplasm. In terms of biological role, modulates RecA activity. This Streptococcus pyogenes serotype M12 (strain MGAS2096) protein is Regulatory protein RecX.